Here is a 100-residue protein sequence, read N- to C-terminus: Large ribosomal subunit protein bL28 (100 aa).

The protein belongs to the bacterial ribosomal protein bL28 family.

In Ehrlichia ruminantium (strain Gardel), this protein is Large ribosomal subunit protein bL28.